We begin with the raw amino-acid sequence, 461 residues long: Acetylcholine receptor subunit alpha (461 aa).

Positions 1-24 (MILCSYWHVGLVLLLFSCCGLVLG) are cleaved as a signal peptide. Topologically, residues 25–234 (SEHETRLVAN…ITYHFIMQRI (210 aa)) are extracellular. Disulfide bonds link cysteine 152-cysteine 166 and cysteine 216-cysteine 217. An N-linked (GlcNAc...) asparagine glycan is attached at asparagine 165. 3 helical membrane passes run 235 to 259 (PLYF…VFYL), 267 to 285 (MTLS…LVIV), and 301 to 320 (YMLF…VVVI). The Cytoplasmic segment spans residues 321 to 432 (NTHHRSPSTH…WKYVAMVIDH (112 aa)). The helical transmembrane segment at 433–451 (ILLCVFMLICIIGTVSVFA) threads the bilayer.

The protein belongs to the ligand-gated ion channel (TC 1.A.9) family. Acetylcholine receptor (TC 1.A.9.1) subfamily. Alpha-1/CHRNA1 sub-subfamily. As to quaternary structure, pentamer of two alpha chains, and one each of the beta, delta, and gamma chains.

The protein localises to the postsynaptic cell membrane. The protein resides in the cell membrane. It carries out the reaction K(+)(in) = K(+)(out). The enzyme catalyses Na(+)(in) = Na(+)(out). Upon acetylcholine binding, the AChR responds by an extensive change in conformation that affects all subunits and leads to opening of an ion-conducting channel across the plasma membrane. This chain is Acetylcholine receptor subunit alpha (CHRNA1), found in Tetronarce californica (Pacific electric ray).